The chain runs to 63 residues: Large ribosomal subunit protein uL29 (63 aa).

This sequence belongs to the universal ribosomal protein uL29 family.

In Haemophilus ducreyi (strain 35000HP / ATCC 700724), this protein is Large ribosomal subunit protein uL29.